Reading from the N-terminus, the 249-residue chain is Triosephosphate isomerase (249 aa).

9 to 11 (NWK) lines the substrate pocket. H95 acts as the Electrophile in catalysis. E165 serves as the catalytic Proton acceptor. Residues G171, S211, and 232-233 (GG) each bind substrate.

The protein belongs to the triosephosphate isomerase family. As to quaternary structure, homodimer.

It localises to the cytoplasm. It catalyses the reaction D-glyceraldehyde 3-phosphate = dihydroxyacetone phosphate. The protein operates within carbohydrate biosynthesis; gluconeogenesis. It participates in carbohydrate degradation; glycolysis; D-glyceraldehyde 3-phosphate from glycerone phosphate: step 1/1. Its function is as follows. Involved in the gluconeogenesis. Catalyzes stereospecifically the conversion of dihydroxyacetone phosphate (DHAP) to D-glyceraldehyde-3-phosphate (G3P). The protein is Triosephosphate isomerase of Chlorobium phaeobacteroides (strain DSM 266 / SMG 266 / 2430).